Consider the following 267-residue polypeptide: Undecaprenyl-diphosphatase (267 aa).

Transmembrane regions (helical) follow at residues 1-21 (MTLF…FLPV), 49-69 (VGTL…AVAG), 83-103 (AFLA…GLAL), 111-131 (ALRS…VLYW), 190-210 (MLMS…EVAA), 219-239 (DAAI…TLMM), and 245-265 (VSFT…LIIA).

Belongs to the UppP family.

The protein resides in the cell inner membrane. It catalyses the reaction di-trans,octa-cis-undecaprenyl diphosphate + H2O = di-trans,octa-cis-undecaprenyl phosphate + phosphate + H(+). Its function is as follows. Catalyzes the dephosphorylation of undecaprenyl diphosphate (UPP). Confers resistance to bacitracin. The chain is Undecaprenyl-diphosphatase from Dinoroseobacter shibae (strain DSM 16493 / NCIMB 14021 / DFL 12).